Reading from the N-terminus, the 506-residue chain is Lysine--tRNA ligase (506 aa).

2 residues coordinate Mg(2+): Glu416 and Glu423.

It belongs to the class-II aminoacyl-tRNA synthetase family. As to quaternary structure, homodimer. The cofactor is Mg(2+).

It localises to the cytoplasm. The catalysed reaction is tRNA(Lys) + L-lysine + ATP = L-lysyl-tRNA(Lys) + AMP + diphosphate. This Xylella fastidiosa (strain 9a5c) protein is Lysine--tRNA ligase (lysS).